Consider the following 75-residue polypeptide: Microcin H47 (75 aa).

A propeptide spanning residues M1 to A15 is cleaved from the precursor. Residues A30–V50 traverse the membrane as a helical segment.

It localises to the secreted. The protein resides in the host cell membrane. Bactericidal antibiotic. Active on bacteria phylogenetically related to the producing strain. This is Microcin H47 (mchB) from Escherichia coli O6:H1 (strain CFT073 / ATCC 700928 / UPEC).